The chain runs to 594 residues: Aspartate--tRNA(Asp/Asn) ligase (594 aa).

Glu173 serves as a coordination point for L-aspartate. The aspartate stretch occupies residues 197-200 (QLFK). Arg219 lines the L-aspartate pocket. ATP is bound by residues 219-221 (RDE) and Gln228. His449 is an L-aspartate binding site. Glu482 serves as a coordination point for ATP. Arg489 serves as a coordination point for L-aspartate. Position 534 to 537 (534 to 537 (GLDR)) interacts with ATP.

Belongs to the class-II aminoacyl-tRNA synthetase family. Type 1 subfamily. Homodimer.

It is found in the cytoplasm. The catalysed reaction is tRNA(Asx) + L-aspartate + ATP = L-aspartyl-tRNA(Asx) + AMP + diphosphate. Aspartyl-tRNA synthetase with relaxed tRNA specificity since it is able to aspartylate not only its cognate tRNA(Asp) but also tRNA(Asn). Reaction proceeds in two steps: L-aspartate is first activated by ATP to form Asp-AMP and then transferred to the acceptor end of tRNA(Asp/Asn). The protein is Aspartate--tRNA(Asp/Asn) ligase of Saccharophagus degradans (strain 2-40 / ATCC 43961 / DSM 17024).